The sequence spans 647 residues: DNA ligase (647 aa).

Residues 30–34, 79–80, and Glu-105 contribute to the NAD(+) site; these read DEEYD and SM. Lys-107 serves as the catalytic N6-AMP-lysine intermediate. Residues Arg-128, Glu-162, and Lys-301 each coordinate NAD(+). Zn(2+)-binding residues include Cys-395, Cys-398, Cys-411, and Cys-416. In terms of domain architecture, BRCT spans 570–647; that stretch reads KSDGVIFGKT…ESAFNELVKE (78 aa).

It belongs to the NAD-dependent DNA ligase family. LigA subfamily. Mg(2+) serves as cofactor. It depends on Mn(2+) as a cofactor.

It carries out the reaction NAD(+) + (deoxyribonucleotide)n-3'-hydroxyl + 5'-phospho-(deoxyribonucleotide)m = (deoxyribonucleotide)n+m + AMP + beta-nicotinamide D-nucleotide.. Functionally, DNA ligase that catalyzes the formation of phosphodiester linkages between 5'-phosphoryl and 3'-hydroxyl groups in double-stranded DNA using NAD as a coenzyme and as the energy source for the reaction. It is essential for DNA replication and repair of damaged DNA. In Campylobacter jejuni subsp. jejuni serotype O:6 (strain 81116 / NCTC 11828), this protein is DNA ligase.